Here is a 305-residue protein sequence, read N- to C-terminus: Homoserine O-acetyltransferase (305 aa).

C142 (acyl-thioester intermediate) is an active-site residue. Substrate contacts are provided by K163 and S192. Residue H235 is the Proton acceptor of the active site. The active site involves E237. R249 contributes to the substrate binding site.

This sequence belongs to the MetA family.

It is found in the cytoplasm. The catalysed reaction is L-homoserine + acetyl-CoA = O-acetyl-L-homoserine + CoA. It functions in the pathway amino-acid biosynthesis; L-methionine biosynthesis via de novo pathway; O-acetyl-L-homoserine from L-homoserine: step 1/1. Functionally, transfers an acetyl group from acetyl-CoA to L-homoserine, forming acetyl-L-homoserine. This Cereibacter sphaeroides (strain ATCC 17025 / ATH 2.4.3) (Rhodobacter sphaeroides) protein is Homoserine O-acetyltransferase.